The following is a 359-amino-acid chain: Peptide chain release factor 1 (359 aa).

Q235 carries the N5-methylglutamine modification.

It belongs to the prokaryotic/mitochondrial release factor family. Methylated by PrmC. Methylation increases the termination efficiency of RF1.

It localises to the cytoplasm. Its function is as follows. Peptide chain release factor 1 directs the termination of translation in response to the peptide chain termination codons UAG and UAA. The protein is Peptide chain release factor 1 of Anaplasma marginale (strain Florida).